Reading from the N-terminus, the 419-residue chain is Octopressin receptor (419 aa).

Topologically, residues 1–37 are extracellular; it reads MENFTEENLHPWITTTTRVYNNVTIFPQYDDELGKFE. N-linked (GlcNAc...) asparagine glycans are attached at residues N3 and N22. The helical transmembrane segment at 38–58 threads the bilayer; that stretch reads IMVLCILCFMALFGNAVVLIV. Topologically, residues 59-80 are cytoplasmic; sequence LRIKKTTLTRMQLLIVYLSVTD. Residues 81–101 form a helical membrane-spanning segment; it reads ISVALFHILPTIILKINVYFL. At 102–108 the chain is on the extracellular side; sequence GDISACR. Cysteines 107 and 182 form a disulfide. A helical transmembrane segment spans residues 109–129; sequence VYQFITVAELYASSFVLIVTA. Over 130–153 the chain is Cytoplasmic; it reads LDRYISICHPLAAHMWTNRRVHMT. The helical transmembrane segment at 154–174 threads the bilayer; it reads TALALFLALMCSLPQLDAVLV. The Extracellular segment spans residues 175–192; it reads DFHGGKLCRPNLTTELAN. N-linked (GlcNAc...) asparagine glycosylation occurs at N185. The chain crosses the membrane as a helical span at residues 193-213; the sequence is IAYSWWAFCSVFFVPLLLLIF. The Cytoplasmic segment spans residues 214–292; it reads FYGRICFVVW…VSKSKIKTIK (79 aa). Residues 253 to 274 are disordered; it reads SQTSSENRVKNYSDARDKDSSR. The span at 259 to 274 shows a compositional bias: basic and acidic residues; sequence NRVKNYSDARDKDSSR. Residues 293 to 313 form a helical membrane-spanning segment; sequence LTFSVVACFIICYTPFFTVLM. Over 314-329 the chain is Extracellular; it reads ARTYDAELSSAQTPAL. A helical transmembrane segment spans residues 330–350; the sequence is VILSLLPSLNSCTNPWIYLAF. The Cytoplasmic portion of the chain corresponds to 351–419; the sequence is SGKVWCRQQS…TTALMSSSPC (69 aa).

The protein belongs to the G-protein coupled receptor 1 family. Vasopressin/oxytocin receptor subfamily. As to expression, present in the nervous system and peripheral tissues.

Its subcellular location is the cell membrane. In terms of biological role, acts as a receptor for octopressin. This Octopus vulgaris (Common octopus) protein is Octopressin receptor.